The primary structure comprises 4080 residues: Hybrid PKS-NRPS synthetase poxE (4080 aa).

The Ketosynthase family 3 (KS3) domain maps to 8–442; it reads REPIAIVGSG…GTNAHAIIEA (435 aa). Residues Cys-181, His-320, and His-362 each act as for beta-ketoacyl synthase activity in the active site. The tract at residues 554-878 is malonyl-CoA:ACP transacylase (MAT) domain; the sequence is VFTGQGAQWA…QRGMNDVEAM (325 aa). Residues 944-1078 form an N-terminal hotdog fold region; the sequence is HPILGTRCPD…GRLVITYGPV (135 aa). The PKS/mFAS DH domain occupies 944-1246; the sequence is HPILGTRCPD…AVPLEATNAD (303 aa). The interval 945–1243 is dehydratase (DH) domain; that stretch reads PILGTRCPDG…GIHAVPLEAT (299 aa). Catalysis depends on His-976, which acts as the Proton acceptor; for dehydratase activity. The tract at residues 1093-1246 is C-terminal hotdog fold; that stretch reads MVDVPSERFY…AVPLEATNAD (154 aa). The Proton donor; for dehydratase activity role is filled by Asp-1152. Positions 1400 to 1585 are methyltransferase (MT) domain; the sequence is HFSDYLASVV…GVDTFTSDAD (186 aa). The segment at 2118–2292 is ketoreductase (KR)domain; it reads TYWLVGLTGS…AGSVMNIGAI (175 aa). A peptidyl carrier protein region spans residues 2399 to 2478; that stretch reads TTDEIYEVIK…TIGEIIKFVL (80 aa). The region spanning 2405–2481 is the Carrier 1 domain; that stretch reads EVIKECFIVK…EIIKFVLEKL (77 aa). O-(pantetheine 4'-phosphoryl)serine is present on Ser-2441. The segment at 2488 to 2569 is disordered; sequence SLGLSPPTGA…AASPSIHTEE (82 aa). A compositionally biased stretch (basic and acidic residues) spans 2511–2525; that stretch reads VVVERRNVPRLEKKI. Residues 2528 to 2545 are compositionally biased toward low complexity; that stretch reads SAGSRTSSSVTGTSKSVS. A compositionally biased stretch (polar residues) spans 2551-2565; that stretch reads DTASSQTSEAASPSI. The interval 2607–3036 is condensation; sequence KEPLSFGQSR…DSKQPGGHVS (430 aa). Residues 3069-3478 are adenylation; it reads DMAKQYPQKL…DGRLRIEGRI (410 aa). In terms of domain architecture, Carrier 2 spans 3593 to 3673; it reads AHLNEAQAQM…KMALLIKPQE (81 aa). The segment at 3598–3670 is thiolation; sequence AQAQMVQLWE…TLEKMALLIK (73 aa). Ser-3633 is modified (O-(pantetheine 4'-phosphoryl)serine). A reductase (RED) domain region spans residues 3740–3959; that stretch reads LTGATGFIGQ…DFVPVEQVVR (220 aa).

It in the C-terminal section; belongs to the NRP synthetase family.

Its pathway is secondary metabolite biosynthesis. Hybrid PKS-NRPS synthetase; part of the gene cluster that mediates the biosynthesis of oxaleimides, cytotoxic compounds containing an unusual disubstituted succinimide moiety. The first step of the pathway is provided by the HR-PKS poxF that serves in a new mode of collaborative biosynthesis with the PKS-NRPS poxE, by providing the olefin containing amino acid substrate via the synthesis of an ACP-bound dec-4-enoate. The cytochrome P450 monooxygenase poxM-catalyzed oxidation at the alpha-position creates the enzyme-bound 2-hydroxydec-4-enoyl-ACP thioester, which may be prone to spontaneous hydrolysis to yield 2-hydroxydec-4-enoic acid due to increased electrophilicity of the carbonyl. 2-hydroxydec-4-enoic acid can then be further oxidized by poxM to yield the alpha-ketoacid 2-oxodec-4-enoicacid, which is reductively aminated by the aminotransferase poxL to yield (S,E)-2-aminodec-4-enoic acid. The Hybrid PKS-NRPS synthetase poxE then performs condensation between the octaketide product of its PKS modules and the amino group of (S,E)-2-aminodec-4-enoic acid which is activated and incorporated by the adenylation domain. The resulting aminoacyl product can be cyclized by the Diels-Alderase PoxQ and reductively released by the reductive (R) domain of poxE to yield an aldehyde intermediate. The released aldehyde is then substrate for a Knoevenagel condensation by the hydrolyase poxO followed by an oxidation at the 5-position of the pyrrolidone ring. The presence of the olefin from the amino acid building block allows for migration of the substituted allyl group to occur. This allylic transposition reaction takes place in a conjugate addition, semipinacol-like fashion to yield a succinimide intermediate. Iterative two-electron oxidations of the C7 methyl of the succinimide intermediate to the carboxylic acid can be catalyzed by one of two remaining cytochrome P450 monooxygenasess poxC or poxD to yield oxaleimide A. Subsequent oxidation yields the maleimide scaffold oxaleimide I. Both oxaleimide A and oxaleimide I can undergo oxidative modifications in the decalin ring to yield the series of products oxaleimides B to H. The sequence is that of Hybrid PKS-NRPS synthetase poxE from Penicillium oxalicum.